The chain runs to 92 residues: UPF0250 protein XCC3453 (92 aa).

The protein belongs to the UPF0250 family.

The polypeptide is UPF0250 protein XCC3453 (Xanthomonas campestris pv. campestris (strain ATCC 33913 / DSM 3586 / NCPPB 528 / LMG 568 / P 25)).